The primary structure comprises 331 residues: Small ribosomal subunit protein uS2 (331 aa).

This sequence belongs to the universal ribosomal protein uS2 family.

The polypeptide is Small ribosomal subunit protein uS2 (Bradyrhizobium diazoefficiens (strain JCM 10833 / BCRC 13528 / IAM 13628 / NBRC 14792 / USDA 110)).